A 90-amino-acid chain; its full sequence is Large ribosomal subunit protein bL27 (90 aa).

A disordered region spans residues 1–21 (MASKKAGGSTRNGRDSEAKRL).

This sequence belongs to the bacterial ribosomal protein bL27 family.

The polypeptide is Large ribosomal subunit protein bL27 (Neisseria gonorrhoeae (strain ATCC 700825 / FA 1090)).